Here is a 367-residue protein sequence, read N- to C-terminus: Phosphoribosylaminoimidazole-succinocarboxamide synthase (367 aa).

This sequence belongs to the SAICAR synthetase family.

The catalysed reaction is 5-amino-1-(5-phospho-D-ribosyl)imidazole-4-carboxylate + L-aspartate + ATP = (2S)-2-[5-amino-1-(5-phospho-beta-D-ribosyl)imidazole-4-carboxamido]succinate + ADP + phosphate + 2 H(+). The protein operates within purine metabolism; IMP biosynthesis via de novo pathway; 5-amino-1-(5-phospho-D-ribosyl)imidazole-4-carboxamide from 5-amino-1-(5-phospho-D-ribosyl)imidazole-4-carboxylate: step 1/2. This chain is Phosphoribosylaminoimidazole-succinocarboxamide synthase, found in Shewanella baltica (strain OS195).